The primary structure comprises 378 residues: MPTIGIVAGEASGDLLGSHLIRALKKQRPDLKFVGIAGPKMIAEGAETLFPMERLSVRGYVEVLRHLPGLLKIRKEVAQYFLDHRPDVFIGIDAPDFNFTLERKLKHQGIPTVHYVSPSIWAWRRGKIKKIQQAVSHMLALFPFEPEIYRQAGVAVSYVGHPLADMLPMEPDMEGAREELKLPQDSLVVAMLPGSRQSEVQQLADLYIKTAKLILSERPDARFLVPLITRETRAIFERALYANEGYDLPVSIMFGHAHQAMEAANAVIVASGTATLEAALIKRPMIITYRMPNLSWQILKRMKYLPYVGLPNVLAGRFIVPELLQHDAVPDKLAATLLQMLSDKSQIADIQTEFRRMHELLRQNTEEKAARAVLSFIK.

The protein belongs to the LpxB family.

The enzyme catalyses a lipid X + a UDP-2-N,3-O-bis[(3R)-3-hydroxyacyl]-alpha-D-glucosamine = a lipid A disaccharide + UDP + H(+). Its pathway is bacterial outer membrane biogenesis; LPS lipid A biosynthesis. Functionally, condensation of UDP-2,3-diacylglucosamine and 2,3-diacylglucosamine-1-phosphate to form lipid A disaccharide, a precursor of lipid A, a phosphorylated glycolipid that anchors the lipopolysaccharide to the outer membrane of the cell. The protein is Lipid-A-disaccharide synthase of Methylobacillus flagellatus (strain ATCC 51484 / DSM 6875 / VKM B-1610 / KT).